A 529-amino-acid chain; its full sequence is Zinc finger protein 490 (529 aa).

The disordered stretch occupies residues 1-53 (MRRNSSLSFQMERPLEEQVQSKWSSSQGRTGTGGSDVLQMQNSEHHGQSIKTQ). The KRAB domain occupies 57-132 (ISLEDVAVNF…ALCENKEDCP (76 aa)). 13 C2H2-type zinc fingers span residues 156–178 (CDCSVCGEVFMHQVSLNRHMRSH), 194–216 (HKCKECGKTFTRSSSIRTHERIH), 222–244 (YECKECGKAFAFLFSFRNHIRIH), 250–272 (YECKECGKAFRYLTALRRHEKNH), 278–300 (YKCKQCGKAFIYYQPFLTHERTH), 306–328 (YECKQCGKAFSCPTYLRSHEKTH), 334–356 (FVCRECGRAFFSHSSLRKHVKTH), 362–384 (YTCKKCGEAFKSSSSCEVHERTH), 390–412 (YECKQCGKAFNSSSYLQLHERVH), 418–440 (YECKECGKAFLYSTHFRIHERTH), 446–468 (YECKQCGRVFIYFSHLRRHERSH), 474–496 (CECKQCGKAFTCLNSLKVHKRIH), and 502–524 (FQCRQCGKAFSYSKSLHVHERTH).

The protein belongs to the krueppel C2H2-type zinc-finger protein family.

It localises to the nucleus. May be involved in transcriptional regulation. The protein is Zinc finger protein 490 (ZNF490) of Homo sapiens (Human).